A 296-amino-acid polypeptide reads, in one-letter code: Protoheme IX farnesyltransferase (296 aa).

9 consecutive transmembrane segments (helical) span residues 29–49 (LSGL…GHVA), 54–74 (ALTV…NCWM), 98–118 (FTAL…LALV), 121–141 (PLTA…YTPM), 147–167 (LALL…WTAA), 175–195 (GLAL…AVSI), 221–241 (WIAA…PLRV), 246–266 (YGAV…AGVG), and 275–295 (NFFL…FLGA).

Belongs to the UbiA prenyltransferase family. Protoheme IX farnesyltransferase subfamily.

It localises to the cell inner membrane. The enzyme catalyses heme b + (2E,6E)-farnesyl diphosphate + H2O = Fe(II)-heme o + diphosphate. The protein operates within porphyrin-containing compound metabolism; heme O biosynthesis; heme O from protoheme: step 1/1. Its function is as follows. Converts heme B (protoheme IX) to heme O by substitution of the vinyl group on carbon 2 of heme B porphyrin ring with a hydroxyethyl farnesyl side group. The chain is Protoheme IX farnesyltransferase from Anaeromyxobacter sp. (strain Fw109-5).